Consider the following 283-residue polypeptide: Elongation factor Ts (283 aa).

Residues 80–83 (TDFV) form an involved in Mg(2+) ion dislocation from EF-Tu region.

Belongs to the EF-Ts family.

The protein localises to the cytoplasm. Associates with the EF-Tu.GDP complex and induces the exchange of GDP to GTP. It remains bound to the aminoacyl-tRNA.EF-Tu.GTP complex up to the GTP hydrolysis stage on the ribosome. The sequence is that of Elongation factor Ts from Enterobacter sp. (strain 638).